The primary structure comprises 673 residues: Potassium-transporting ATPase ATP-binding subunit (673 aa).

The next 4 helical transmembrane spans lie at 34-54 (IMFVVEVGMLLALGLTIYPDL), 65-85 (VFSIFIILLLTLVFANFSEAL), 216-236 (IALFTLLMTLTIIFLVVILTM), and 253-273 (IALAVCLIPTTIGGLLSAIGI). The 4-aspartylphosphate intermediate role is filled by Asp-304. Residues Asp-341, Glu-345, 370–377 (FTAETRMS), and Lys-388 contribute to the ATP site. The Mg(2+) site is built by Asp-511 and Asp-515. 3 helical membrane passes run 581–601 (FAILPAMFMAAMPAMNHLNIM), 609–629 (AVLSALIFNALIIVLLIPIAM), and 649–669 (VYGLGGMIVPFIGIKLIDLII).

The protein belongs to the cation transport ATPase (P-type) (TC 3.A.3) family. Type IA subfamily. In terms of assembly, the system is composed of three essential subunits: KdpA, KdpB and KdpC.

The protein resides in the cell membrane. It catalyses the reaction K(+)(out) + ATP + H2O = K(+)(in) + ADP + phosphate + H(+). In terms of biological role, part of the high-affinity ATP-driven potassium transport (or Kdp) system, which catalyzes the hydrolysis of ATP coupled with the electrogenic transport of potassium into the cytoplasm. This subunit is responsible for energy coupling to the transport system and for the release of the potassium ions to the cytoplasm. The chain is Potassium-transporting ATPase ATP-binding subunit from Staphylococcus epidermidis (strain ATCC 35984 / DSM 28319 / BCRC 17069 / CCUG 31568 / BM 3577 / RP62A).